The sequence spans 480 residues: Vinorine hydroxylase (480 aa).

A helical membrane pass occupies residues 3–23 (LLQILLAIAGLLAILLLQKQW). Cys418 is a heme binding site.

Belongs to the cytochrome P450 family. Heme is required as a cofactor. In terms of tissue distribution, mainly expressed in roots and, to a lesser extent, in leaves.

The protein resides in the membrane. It catalyses the reaction vinorine + reduced [NADPH--hemoprotein reductase] + O2 = vomilenine + oxidized [NADPH--hemoprotein reductase] + H2O + H(+). It carries out the reaction vomilenine = perakine. It functions in the pathway alkaloid biosynthesis; ajmaline biosynthesis. In terms of biological role, a cytochrome P450 monooxygenase involved in the biosynthesis of ajmaline-type monoterpenoid indole alkaloids (MIAs) natural products, important plant-derived pharmaceuticals used in the therapy of heart disorders. Catalyzes the hydroxylation of vinorine to vomilenine, an intermediate chemical in the biosynthesis of ajmaline. Supports also vomilenine isomerization to perakine. The polypeptide is Vinorine hydroxylase (Rauvolfia serpentina (Serpentine wood)).